The sequence spans 406 residues: MLNNRNVLLCVSGGIAVYKACALTSKLVQAGANVKVIMTESACRFVSPLTFQALSRHEVYTDTFKEQNPSVISHIDAADWADLIIVAPATANVIGKLANGIADDMLTTTLLAATAPVWIAPAMNVHMYDHPAVKRNISVLYQDGYCFIEPSEGYLACGYVGKGRLEEPENIVKLAEKHFAEETSAPLEGKHVVITAGPTREAIDPVRFFTNKSTGKMGYALAEAAVQLGARVILISGPVSLDQPKGLAEFIPVQSAADMREAVLSVYDASDIVIKTAAVADFTPKTVFDHKMKKQDGGMTLELKRTVDILKELGEKKKEQILVGFAAETQDIEHYARKKLAAKNLDLIVANDVKANGAGFGADTNIVTIFFKDGHKRELPIMSKLDVSFEILQEIAALSKQTGERS.

Residues 1-191 form a phosphopantothenoylcysteine decarboxylase region; it reads MLNNRNVLLC…ETSAPLEGKH (191 aa). Residue cysteine 157 is the Proton donor of the active site. The interval 192–406 is phosphopantothenate--cysteine ligase; that stretch reads VVITAGPTRE…ALSKQTGERS (215 aa). The CTP site is built by aspartate 281, lysine 291, phenylalanine 325, lysine 339, and lysine 343.

This sequence in the N-terminal section; belongs to the HFCD (homo-oligomeric flavin containing Cys decarboxylase) superfamily. The protein in the C-terminal section; belongs to the PPC synthetase family. Requires Mg(2+) as cofactor. FMN is required as a cofactor.

The catalysed reaction is N-[(R)-4-phosphopantothenoyl]-L-cysteine + H(+) = (R)-4'-phosphopantetheine + CO2. It catalyses the reaction (R)-4'-phosphopantothenate + L-cysteine + CTP = N-[(R)-4-phosphopantothenoyl]-L-cysteine + CMP + diphosphate + H(+). Its pathway is cofactor biosynthesis; coenzyme A biosynthesis; CoA from (R)-pantothenate: step 2/5. The protein operates within cofactor biosynthesis; coenzyme A biosynthesis; CoA from (R)-pantothenate: step 3/5. Functionally, catalyzes two sequential steps in the biosynthesis of coenzyme A. In the first step cysteine is conjugated to 4'-phosphopantothenate to form 4-phosphopantothenoylcysteine. In the second step the latter compound is decarboxylated to form 4'-phosphopantotheine. The sequence is that of Coenzyme A biosynthesis bifunctional protein CoaBC from Bacillus subtilis (strain 168).